Here is a 316-residue protein sequence, read N- to C-terminus: Pantothenate kinase (316 aa).

95–102 (GSVAVGKS) lines the ATP pocket.

Belongs to the prokaryotic pantothenate kinase family.

The protein localises to the cytoplasm. It catalyses the reaction (R)-pantothenate + ATP = (R)-4'-phosphopantothenate + ADP + H(+). Its pathway is cofactor biosynthesis; coenzyme A biosynthesis; CoA from (R)-pantothenate: step 1/5. This chain is Pantothenate kinase, found in Shewanella pealeana (strain ATCC 700345 / ANG-SQ1).